We begin with the raw amino-acid sequence, 158 residues long: MFRGIYETTIDAKGRTSLPARFRDVLVESFGDERFFVTNSVPVDLGGGVYSSGLLIFPYQEWFIFEESFLNGKGLTSAQRNSIMRTIVAPAVECSADKLGRVLVPPHLRKNAVLEREILFVGAMKKVEIWSQSEWDKVRAHDMKAFPSDSEAVAELGL.

2 SpoVT-AbrB domains span residues 5 to 50 (IYET…GGVY) and 91 to 134 (AVEC…SQSE).

This sequence belongs to the MraZ family. Forms oligomers.

The protein resides in the cytoplasm. The protein localises to the nucleoid. In Geobacter metallireducens (strain ATCC 53774 / DSM 7210 / GS-15), this protein is Transcriptional regulator MraZ.